The following is an 856-amino-acid chain: Serine/threonine-protein kinase unc-51 (856 aa).

One can recognise a Protein kinase domain in the interval 9–275 (YSKRDLLGHG…FEDFFNHPFL (267 aa)). ATP is bound by residues 15–23 (LGHGAFAIV) and lysine 39. Aspartate 134 acts as the Proton acceptor in catalysis. A disordered region spans residues 304–327 (PQSSLPVPKRAGSTKLDSPTPVRR). The LIR signature appears at 358–361 (FTFL). Disordered stretches follow at residues 362 to 391 (PPRQESSPVKQVQVHTNVSPSLTTCKPVPV), 405 to 471 (LAAA…ERMT), and 520 to 582 (PTTT…PTEP). Polar residues predominate over residues 365 to 385 (QESSPVKQVQVHTNVSPSLTT). Low complexity predominate over residues 411–436 (TAVPSSSSPTGSAVSAQHQHQHQQQQ). Composition is skewed to polar residues over residues 527–536 (IPKSATTANI) and 566–578 (KYQQTDVNNSPTA). The tract at residues 750–856 (YHQCLVRSQE…RQGFVAAVNT (107 aa)) is required for interaction with unc-14 and vab-8.

Belongs to the protein kinase superfamily. Ser/Thr protein kinase family. APG1/unc-51/ULK1 subfamily. Interacts with unc-14 and vab-8. Interacts (via C-terminus) with atg-13. Interacts (via the LIR motif) with lgg-1; the interaction is direct. The cofactor is Mg(2+).

It carries out the reaction L-seryl-[protein] + ATP = O-phospho-L-seryl-[protein] + ADP + H(+). It catalyses the reaction L-threonyl-[protein] + ATP = O-phospho-L-threonyl-[protein] + ADP + H(+). In terms of biological role, protein kinase important for axonal elongation and axonal guidance. Functions in the CAN axons to direct both anterior and posterior migrations. Phosphorylates both unc-14 and vab-8. Component of the unc-51/atg-13 complex that is probably recruited by lgg-1 to preautophagosomes and is required for autophagosome formation. Interaction with autophagy related proteins such as atg-13 links it to the autophagy machinery to in turn promote P-granule degradation in somatic cells. Plays a role in mitophagy during limited food availability. Regulates cell size. Plays a role in male tail ray pattern formation. May be required for normal dauer morphogenesis. The sequence is that of Serine/threonine-protein kinase unc-51 from Caenorhabditis elegans.